The chain runs to 975 residues: Exocyst complex component 4 (975 aa).

At A2 the chain carries N-acetylalanine. At K9 the chain carries N6-acetyllysine. At S32 the chain carries Phosphoserine. Positions 32-114 (STSDDVEDRE…HCKRDELRKL (83 aa)) form a coiled coil. A compositionally biased stretch (basic and acidic residues) spans 211 to 224 (RNKEKGKMSSHGKD). The tract at residues 211–230 (RNKEKGKMSSHGKDPSPGPL) is disordered. S226 is subject to Phosphoserine. Position 238 is a phosphothreonine (T238). S469 is modified (phosphoserine).

It belongs to the SEC8 family. The exocyst complex is composed of EXOC1, EXOC2, EXOC3, EXOC4, EXOC5, EXOC6, EXOC7 and EXOC8. Interacts with BIRC6/bruce. Interacts with MYRIP. Interacts with SH3BP1; required for the localization of both SH3BP1 and the exocyst to the leading edge of migrating cells. Interacts with SLC6A9. Expressed in the striatum (at protein level).

Its subcellular location is the midbody. The protein localises to the midbody ring. The protein resides in the cell projection. It localises to the cytoplasm. It is found in the cytoskeleton. Its subcellular location is the microtubule organizing center. The protein localises to the centrosome. Component of the exocyst complex involved in the docking of exocytic vesicles with fusion sites on the plasma membrane. This is Exocyst complex component 4 (Exoc4) from Mus musculus (Mouse).